A 188-amino-acid polypeptide reads, in one-letter code: Large ribosomal subunit protein uL10 (188 aa).

The protein belongs to the universal ribosomal protein uL10 family. As to quaternary structure, part of the ribosomal stalk of the 50S ribosomal subunit. The N-terminus interacts with L11 and the large rRNA to form the base of the stalk. The C-terminus forms an elongated spine to which L12 dimers bind in a sequential fashion forming a multimeric L10(L12)X complex.

Forms part of the ribosomal stalk, playing a central role in the interaction of the ribosome with GTP-bound translation factors. This chain is Large ribosomal subunit protein uL10, found in Crocosphaera subtropica (strain ATCC 51142 / BH68) (Cyanothece sp. (strain ATCC 51142)).